Here is a 229-residue protein sequence, read N- to C-terminus: Orotidine 5'-phosphate decarboxylase (229 aa).

Substrate-binding positions include Asp-10, Lys-32, 59–68 (DLKFHDIPNT), Thr-119, Arg-180, Gln-189, Gly-209, and Arg-210. The Proton donor role is filled by Lys-61.

The protein belongs to the OMP decarboxylase family. Type 1 subfamily. In terms of assembly, homodimer.

The catalysed reaction is orotidine 5'-phosphate + H(+) = UMP + CO2. It functions in the pathway pyrimidine metabolism; UMP biosynthesis via de novo pathway; UMP from orotate: step 2/2. In terms of biological role, catalyzes the decarboxylation of orotidine 5'-monophosphate (OMP) to uridine 5'-monophosphate (UMP). This chain is Orotidine 5'-phosphate decarboxylase, found in Legionella pneumophila subsp. pneumophila (strain Philadelphia 1 / ATCC 33152 / DSM 7513).